The sequence spans 293 residues: MSQRTESYLVGLVGDGVTPSLTPPMHEREGDVQGLRYLYRPIDLLELGLAGDSVGEVLRSARTLGFNGLNITHPCKQLVLQHLDEVSPDARRLGAVNTVVIRDGRFIGHNTDFSGFAAALASGLPGARLDRVVQLGAGGAGSAVAYALLSAGAKTLDLVDMDAERAAARAEELSGFFPDSTVTARTTADLPQLMPLADGLVHCTPVGMAAHPGVPLDLELLESRHWVADIVYRPIDTELVQGARAKGCDVLDGGRMAVGQAADAFRIFTGLDADPERMRSHFLELVAAEEVAA.

Residues 20 to 22 (SLT) and Thr72 each bind shikimate. Lys76 serves as the catalytic Proton acceptor. The shikimate site is built by Asn97 and Asp112. NADP(+) is bound by residues 136–140 (GAGGA) and Ile230. Tyr232 contacts shikimate. Gly253 serves as a coordination point for NADP(+).

Belongs to the shikimate dehydrogenase family. In terms of assembly, homodimer.

The catalysed reaction is shikimate + NADP(+) = 3-dehydroshikimate + NADPH + H(+). The protein operates within metabolic intermediate biosynthesis; chorismate biosynthesis; chorismate from D-erythrose 4-phosphate and phosphoenolpyruvate: step 4/7. Functionally, involved in the biosynthesis of the chorismate, which leads to the biosynthesis of aromatic amino acids. Catalyzes the reversible NADPH linked reduction of 3-dehydroshikimate (DHSA) to yield shikimate (SA). The protein is Shikimate dehydrogenase (NADP(+)) of Pseudarthrobacter chlorophenolicus (strain ATCC 700700 / DSM 12829 / CIP 107037 / JCM 12360 / KCTC 9906 / NCIMB 13794 / A6) (Arthrobacter chlorophenolicus).